A 224-amino-acid polypeptide reads, in one-letter code: MASPSSLCLLAALALISWQAMASDPSPLQDFCVADMHSPVRVNGFACLNPMEVNADHFFKAAKLDTPRKTNKVGSNVTLINVMQIPGLNTLGISIARIDYAPLGQNPPHTHPRATEILTVLEGTLYVGFVTSNPNNTLFSKVLNKGDVFVFPQGLIHFQFNPNPHQPAVAIAALSSQNPGAITIANAVFGSKPPISDEVLAKAFQVEKGTIDWLQAQFWENNHY.

The N-terminal stretch at M1 to A22 is a signal peptide. C32 and C47 are oxidised to a cystine. One can recognise a Cupin type-1 domain in the interval A62–D212. The N-linked (GlcNAc...) asparagine glycan is linked to N76. 3 residues coordinate Mn(2+): H109, H111, and E116. Residue N135 is glycosylated (N-linked (GlcNAc...) asparagine). H157 is a binding site for Mn(2+).

The protein belongs to the germin family. In terms of assembly, oligomer (believed to be a pentamer but probably hexamer).

The protein resides in the secreted. It is found in the extracellular space. The protein localises to the apoplast. Functionally, plays a role in broad-spectrum disease resistance. Probably has no oxalate oxidase activity even if the active site is conserved. The polypeptide is Germin-like protein 8-5 (Oryza sativa subsp. japonica (Rice)).